The chain runs to 361 residues: Molybdenum import ATP-binding protein ModC (361 aa).

The ABC transporter domain occupies 1–228 (MLNINIEKQL…EQMRPWVPLQ (228 aa)). Residue 31–38 (GRSGAGKT) coordinates ATP. The region spanning 289–356 (GSSVRNLLRG…IKGVTMTQMD (68 aa)) is the Mop domain.

This sequence belongs to the ABC transporter superfamily. Molybdate importer (TC 3.A.1.8) family. In terms of assembly, the complex is composed of two ATP-binding proteins (ModC), two transmembrane proteins (ModB) and a solute-binding protein (ModA).

It is found in the cell inner membrane. It carries out the reaction molybdate(out) + ATP + H2O = molybdate(in) + ADP + phosphate + H(+). Functionally, part of the ABC transporter complex ModABC involved in molybdenum import. Responsible for energy coupling to the transport system. The chain is Molybdenum import ATP-binding protein ModC from Shewanella sp. (strain MR-7).